The primary structure comprises 123 residues: Phosphoribosyl-AMP cyclohydrolase (123 aa).

Position 81 (Asp81) interacts with Mg(2+). Cys82 contributes to the Zn(2+) binding site. Asp83 and Asp85 together coordinate Mg(2+). 2 residues coordinate Zn(2+): Cys98 and Cys105.

The protein belongs to the PRA-CH family. Homodimer. Requires Mg(2+) as cofactor. The cofactor is Zn(2+).

It is found in the cytoplasm. It catalyses the reaction 1-(5-phospho-beta-D-ribosyl)-5'-AMP + H2O = 1-(5-phospho-beta-D-ribosyl)-5-[(5-phospho-beta-D-ribosylamino)methylideneamino]imidazole-4-carboxamide. Its pathway is amino-acid biosynthesis; L-histidine biosynthesis; L-histidine from 5-phospho-alpha-D-ribose 1-diphosphate: step 3/9. In terms of biological role, catalyzes the hydrolysis of the adenine ring of phosphoribosyl-AMP. In Nocardioides sp. (strain ATCC BAA-499 / JS614), this protein is Phosphoribosyl-AMP cyclohydrolase.